The primary structure comprises 156 residues: Transcription elongation factor GreA (156 aa).

Positions 46–66 (AEYHSAREKQSFIEGRIKELE) form a coiled coil.

It belongs to the GreA/GreB family.

Necessary for efficient RNA polymerase transcription elongation past template-encoded arresting sites. The arresting sites in DNA have the property of trapping a certain fraction of elongating RNA polymerases that pass through, resulting in locked ternary complexes. Cleavage of the nascent transcript by cleavage factors such as GreA or GreB allows the resumption of elongation from the new 3'terminus. GreA releases sequences of 2 to 3 nucleotides. This chain is Transcription elongation factor GreA, found in Ruegeria pomeroyi (strain ATCC 700808 / DSM 15171 / DSS-3) (Silicibacter pomeroyi).